Here is a 125-residue protein sequence, read N- to C-terminus: S-adenosylmethionine decarboxylase proenzyme (125 aa).

Residue S61 is the Schiff-base intermediate with substrate; via pyruvic acid of the active site. Pyruvic acid (Ser); by autocatalysis is present on S61. H66 serves as the catalytic Proton acceptor; for processing activity. Catalysis depends on C81, which acts as the Proton donor; for catalytic activity.

Belongs to the prokaryotic AdoMetDC family. Type 1 subfamily. Heterotetramer of two alpha and two beta chains arranged as a dimer of alpha/beta heterodimers. Pyruvate is required as a cofactor. In terms of processing, is synthesized initially as an inactive proenzyme. Formation of the active enzyme involves a self-maturation process in which the active site pyruvoyl group is generated from an internal serine residue via an autocatalytic post-translational modification. Two non-identical subunits are generated from the proenzyme in this reaction, and the pyruvate is formed at the N-terminus of the alpha chain, which is derived from the carboxyl end of the proenzyme. The post-translation cleavage follows an unusual pathway, termed non-hydrolytic serinolysis, in which the side chain hydroxyl group of the serine supplies its oxygen atom to form the C-terminus of the beta chain, while the remainder of the serine residue undergoes an oxidative deamination to produce ammonia and the pyruvoyl group blocking the N-terminus of the alpha chain.

The enzyme catalyses S-adenosyl-L-methionine + H(+) = S-adenosyl 3-(methylsulfanyl)propylamine + CO2. It participates in amine and polyamine biosynthesis; S-adenosylmethioninamine biosynthesis; S-adenosylmethioninamine from S-adenosyl-L-methionine: step 1/1. Its function is as follows. Catalyzes the decarboxylation of S-adenosylmethionine to S-adenosylmethioninamine (dcAdoMet), the propylamine donor required for the synthesis of the polyamines spermine and spermidine from the diamine putrescine. This Prochlorococcus marinus (strain MIT 9313) protein is S-adenosylmethionine decarboxylase proenzyme.